A 195-amino-acid chain; its full sequence is Probable GTP-binding protein EngB (195 aa).

An EngB-type G domain is found at 24 to 195; it reads ELPEIALAGR…EAWDAILEKL (172 aa). GTP-binding positions include 32 to 39, 59 to 63, 77 to 80, 144 to 147, and 176 to 178; these read GRSNVGKS, GKTQL, DVPG, TKAD, and FSS. 2 residues coordinate Mg(2+): serine 39 and threonine 61.

It belongs to the TRAFAC class TrmE-Era-EngA-EngB-Septin-like GTPase superfamily. EngB GTPase family. Mg(2+) is required as a cofactor.

Its function is as follows. Necessary for normal cell division and for the maintenance of normal septation. In Streptococcus pneumoniae (strain P1031), this protein is Probable GTP-binding protein EngB.